The following is a 674-amino-acid chain: DNA ligase (674 aa).

NAD(+) contacts are provided by residues 35-39, 84-85, and glutamate 118; these read DFEFD and SL. The N6-AMP-lysine intermediate role is filled by lysine 120. The NAD(+) site is built by arginine 141, glutamate 184, lysine 297, and lysine 321. 4 residues coordinate Zn(2+): cysteine 415, cysteine 418, cysteine 433, and cysteine 439. The region spanning 598–674 is the BRCT domain; it reads QVNRNFEGVT…VSEDEFEAML (77 aa).

The protein belongs to the NAD-dependent DNA ligase family. LigA subfamily. Requires Mg(2+) as cofactor. It depends on Mn(2+) as a cofactor.

It catalyses the reaction NAD(+) + (deoxyribonucleotide)n-3'-hydroxyl + 5'-phospho-(deoxyribonucleotide)m = (deoxyribonucleotide)n+m + AMP + beta-nicotinamide D-nucleotide.. In terms of biological role, DNA ligase that catalyzes the formation of phosphodiester linkages between 5'-phosphoryl and 3'-hydroxyl groups in double-stranded DNA using NAD as a coenzyme and as the energy source for the reaction. It is essential for DNA replication and repair of damaged DNA. The protein is DNA ligase of Pelodictyon phaeoclathratiforme (strain DSM 5477 / BU-1).